Reading from the N-terminus, the 2190-residue chain is Non-reducing polyketide synthase mapC' (2190 aa).

Residues 14–268 (VLFGPQCPDI…HHEAHREGIQ (255 aa)) are N-terminal acylcarrier protein transacylase domain (SAT). The Ketosynthase family 3 (KS3) domain occupies 401 to 817 (ASPIAITGMA…GSNAALIVKE (417 aa)). Catalysis depends on for beta-ketoacyl synthase activity residues Cys566, His701, and His740. The malonyl-CoA:ACP transacylase (MAT) domain stretch occupies residues 893–1190 (CFGGQNGLTA…NVTSALWAQG (298 aa)). Ser979 (for acyl/malonyl transferase activity) is an active-site residue. The interval 1243–1375 (GQEAGLLCQL…GTVCLHQERS (133 aa)) is N-terminal hotdog fold. The PKS/mFAS DH domain occupies 1243 to 1552 (GQEAGLLCQL…FTSVSIRSLT (310 aa)). Positions 1251–1556 (QLSESPDERL…SIRSLTRALA (306 aa)) are product template (PT) domain. His1277 (proton acceptor; for dehydratase activity) is an active-site residue. The segment at 1401 to 1552 (ASNGLKGSTV…FTSVSIRSLT (152 aa)) is C-terminal hotdog fold. Asp1458 functions as the Proton donor; for dehydratase activity in the catalytic mechanism. The region spanning 1597–1671 (ANDLATVQEM…GLVEHIFPGH (75 aa)) is the Carrier domain. The residue at position 1631 (Ser1631) is an O-(pantetheine 4'-phosphoryl)serine. The interval 1840–2187 (ATMSPSKPIK…AEGYEFLRTH (348 aa)) is methyltransferase (CMeT) domain. Catalysis depends on for thioesterase activity residues Ser1969, Asp2127, and His2159.

It localises to the cytoplasm. Its subcellular location is the cytosol. The enzyme catalyses 3 malonyl-CoA + acetyl-CoA + S-adenosyl-L-methionine + H(+) = 5-methylorsellinate + S-adenosyl-L-homocysteine + 3 CO2 + 4 CoA. It functions in the pathway secondary metabolite biosynthesis; terpenoid biosynthesis. Non-reducing polyketide synthase; part of the gene cluster that mediates the biosynthesis of mycophenolic acid (MPA), the first isolated antibiotic natural product in the world obtained from a culture of Penicillium brevicompactum in 1893. MpaC' catalyzes the synthesis of 5-methylorsellinic acid (5MOA) via the condensation of 1 acetyl-CoA starter unit with 3 malonyl-CoA units and one methylation step. The first step of the pathway is the synthesis of 5-methylorsellinic acid (5MOA) by the cytosolic polyketide synthase mpaC. 5MOA is then converted to the phthalide compound 5,7-dihydroxy-4,6-dimethylphthalide (DHMP) by the endoplasmic reticulum-bound cytochrome P450 monooxygenase mpaDE. MpaDE first catalyzes hydroxylation of 5-MOA to 4,6-dihydroxy-2-(hydroxymethyl)-3-methylbenzoic acid (DHMB). MpaDE then acts as a lactone synthase that catalyzes the ring closure to convert DHMB into DHMP. The next step is the prenylation of DHMP by the Golgi apparatus-associated prenyltransferase mpaA to yield farnesyl-DHMP (FDHMP). The ER-bound oxygenase mpaB then mediates the oxidative cleavage the C19-C20 double bond in FDHMP to yield FDHMP-3C via a mycophenolic aldehyde intermediate. The O-methyltransferase mpaG catalyzes the methylation of FDHMP-3C to yield MFDHMP-3C. After the cytosolic methylation of FDHMP-3C, MFDHMP-3C enters into peroxisomes probably via free diffusion due to its low molecular weight. Upon a peroxisomal CoA ligation reaction, catalyzed by a beta-oxidation component enzyme acyl-CoA ligase ACL891, MFDHMP-3C-CoA would then be restricted to peroxisomes for the following beta-oxidation pathway steps. The peroxisomal beta-oxidation machinery than converts MFDHMP-3C-CoA into MPA_CoA, via a beta-oxidation chain-shortening process. Finally mpaH acts as a peroxisomal acyl-CoA hydrolase with high substrate specificity toward MPA-CoA to release the final product MPA. The polypeptide is Non-reducing polyketide synthase mapC' (Penicillium brevicompactum).